The following is a 284-amino-acid chain: Isopentenyl-diphosphate delta-isomerase (284 aa).

Residue Lys-77 participates in substrate binding. Positions 81 and 92 each coordinate Mg(2+). The Nudix hydrolase domain occupies 90 to 256 (LLHRAFSVFL…SLVFTPWFKL (167 aa)). Residues Arg-111 and Lys-115 each coordinate substrate. Cys-127 is an active-site residue. Ser-128 is a binding site for substrate. Positions 128–172 (SHPLCVPSELGVDSSLEGSKDVNNLTNAVKGAKVAAQRKLEHELG) match the Nudix box motif. 2 residues coordinate Mg(2+): Glu-204 and Glu-206. The active site involves Glu-206.

The protein belongs to the IPP isomerase type 1 family. It depends on Mg(2+) as a cofactor.

It localises to the cytoplasm. It carries out the reaction isopentenyl diphosphate = dimethylallyl diphosphate. The protein operates within isoprenoid biosynthesis; dimethylallyl diphosphate biosynthesis; dimethylallyl diphosphate from isopentenyl diphosphate: step 1/1. Its function is as follows. Isopentenyl-diphosphate delta-isomerase; part of the second module of ergosterol biosynthesis pathway that includes the middle steps of the pathway. IDI1 catalyzes the 1,3-allylic rearrangement of isopentenyl (IPP) to its highly electrophilic allylic isomer, dimethylallyl diphosphate (DMAPP). The second module is carried out in the vacuole and involves the formation of farnesyl diphosphate, which is also an important intermediate in the biosynthesis of ubiquinone, dolichol, heme and prenylated proteins. Activity by the mevalonate kinase ERG12 first converts mevalonate into 5-phosphomevalonate. 5-phosphomevalonate is then further converted to 5-diphosphomevalonate by the phosphomevalonate kinase ERG8. The diphosphomevalonate decarboxylase MVD then produces isopentenyl diphosphate. The isopentenyl-diphosphate delta-isomerase IDI1 then catalyzes the 1,3-allylic rearrangement of the homoallylic substrate isopentenyl (IPP) to its highly electrophilic allylic isomer, dimethylallyl diphosphate (DMAPP). Finally the farnesyl diphosphate synthase ERG20 catalyzes the sequential condensation of isopentenyl pyrophosphate with dimethylallyl pyrophosphate, and then with the resultant geranylpyrophosphate to the ultimate product farnesyl pyrophosphate. This chain is Isopentenyl-diphosphate delta-isomerase, found in Candida albicans (strain SC5314 / ATCC MYA-2876) (Yeast).